The sequence spans 498 residues: Protein nucleotidyltransferase YdiU (498 aa).

8 residues coordinate ATP: glycine 88, glycine 90, arginine 91, lysine 111, aspartate 123, glycine 124, arginine 174, and arginine 181. Aspartate 250 (proton acceptor) is an active-site residue. Asparagine 251 and aspartate 260 together coordinate Mg(2+). Residue aspartate 260 coordinates ATP.

It belongs to the SELO family. Requires Mg(2+) as cofactor. Mn(2+) serves as cofactor.

The catalysed reaction is L-seryl-[protein] + ATP = 3-O-(5'-adenylyl)-L-seryl-[protein] + diphosphate. It carries out the reaction L-threonyl-[protein] + ATP = 3-O-(5'-adenylyl)-L-threonyl-[protein] + diphosphate. The enzyme catalyses L-tyrosyl-[protein] + ATP = O-(5'-adenylyl)-L-tyrosyl-[protein] + diphosphate. It catalyses the reaction L-histidyl-[protein] + UTP = N(tele)-(5'-uridylyl)-L-histidyl-[protein] + diphosphate. The catalysed reaction is L-seryl-[protein] + UTP = O-(5'-uridylyl)-L-seryl-[protein] + diphosphate. It carries out the reaction L-tyrosyl-[protein] + UTP = O-(5'-uridylyl)-L-tyrosyl-[protein] + diphosphate. In terms of biological role, nucleotidyltransferase involved in the post-translational modification of proteins. It can catalyze the addition of adenosine monophosphate (AMP) or uridine monophosphate (UMP) to a protein, resulting in modifications known as AMPylation and UMPylation. This chain is Protein nucleotidyltransferase YdiU, found in Methylorubrum populi (strain ATCC BAA-705 / NCIMB 13946 / BJ001) (Methylobacterium populi).